The chain runs to 192 residues: MTLILGSASPRRRELLAQLGVTPDAILPPDIDEEPRRGELPRPYCARLAAEKAAAVAAGPEDVVLCADTTVALGRRILGKPADAGEAARFLVALGGRRHEVITAVAVRRGDRLWQREVVSQVKMKRLSDLELNAYLASGEWEGKAGGYAIQGLASAFIPWISGSFTGIVGLPLAETATLLAAAGVPLYRAAA.

Asp-68 serves as the catalytic Proton acceptor.

It belongs to the Maf family. YhdE subfamily. The cofactor is a divalent metal cation.

It is found in the cytoplasm. It catalyses the reaction dTTP + H2O = dTMP + diphosphate + H(+). It carries out the reaction UTP + H2O = UMP + diphosphate + H(+). In terms of biological role, nucleoside triphosphate pyrophosphatase that hydrolyzes dTTP and UTP. May have a dual role in cell division arrest and in preventing the incorporation of modified nucleotides into cellular nucleic acids. This is dTTP/UTP pyrophosphatase from Cereibacter sphaeroides (strain ATCC 17023 / DSM 158 / JCM 6121 / CCUG 31486 / LMG 2827 / NBRC 12203 / NCIMB 8253 / ATH 2.4.1.) (Rhodobacter sphaeroides).